The primary structure comprises 422 residues: Nucleoside transporter 1 (422 aa).

Residues 1-38 lie on the Cytoplasmic side of the membrane; sequence MSTGKESSKAYADIESRGDYKDDGKKGSTLSSKQHFML. Residues 39–59 form a helical membrane-spanning segment; sequence SLTFILIGLSSLNVWNTALGL. Residue Trp53 coordinates inosine. The Extracellular segment spans residues 60-63; sequence NINF. Residues 64–82 traverse the membrane as a helical segment; the sequence is KYNTFQITGLVCSSIVALF. Topologically, residues 83–87 are cytoplasmic; it reads VEIPK. Residues 88–107 traverse the membrane as a helical segment; it reads IMLPFLLGGLSILCAGFQIS. The Extracellular segment spans residues 108-116; that stretch reads HSFFTDTQF. Residues 117-139 form a helical membrane-spanning segment; the sequence is DTYCLVAFIVIGVVAGLAQTIAF. Gln135 contributes to the inosine binding site. Residues 140–149 lie on the Cytoplasmic side of the membrane; sequence NIGSTMEDNM. The chain crosses the membrane as a helical span at residues 150–174; it reads GGYMSAGIGISGVFIFVINLLLDQF. Over 175 to 185 the chain is Extracellular; the sequence is VSPEKHYGVNK. A helical transmembrane segment spans residues 186-208; that stretch reads AKLLYLYIICELCLILAIVFCVC. The Cytoplasmic portion of the chain corresponds to 209 to 241; that stretch reads NLDLTNKNNKKDEENKENNATLSYMELFKDSYK. A helical membrane pass occupies residues 242-265; that stretch reads AILTMFLVNWLTLQLFPGVGHKKW. Over 266–274 the chain is Extracellular; the sequence is QESHNISDY. The helical transmembrane segment at 275 to 294 threads the bilayer; the sequence is NVTIIVGMFQVFDFLSRYPP. Residues Asp287 and Arg291 each contribute to the inosine site. Over 295 to 309 the chain is Cytoplasmic; that stretch reads NLTHIKIFKNFTFSL. The helical transmembrane segment at 310 to 330 threads the bilayer; the sequence is NKLLVANSLRLLFIPWFILNA. Residues 331–338 are Extracellular-facing; sequence CVDHPFFK. The chain crosses the membrane as a helical span at residues 339–362; that stretch reads NIVQQCVCMAMLAFTNGWFNTVPF. The Cytoplasmic segment spans residues 363–374; it reads LVFVKELKKAKK. A helical membrane pass occupies residues 375–397; that stretch reads KKEIEIISTFLVIAMFVGLFCGI. Residues 398–422 are Extracellular-facing; it reads WTTYIYNLFNIVLPKPDLPPIDVTQ.

The protein belongs to the SLC29A/ENT transporter (TC 2.A.57) family.

Its subcellular location is the cell membrane. The enzyme catalyses inosine(in) = inosine(out). It carries out the reaction adenosine(in) = adenosine(out). The catalysed reaction is hypoxanthine(out) = hypoxanthine(in). It catalyses the reaction guanosine(in) = guanosine(out). The enzyme catalyses guanine(out) = guanine(in). It carries out the reaction thymidine(in) = thymidine(out). The catalysed reaction is uridine(out) = uridine(in). It catalyses the reaction uracil(in) = uracil(out). The enzyme catalyses thymine(out) = thymine(in). It carries out the reaction adenine(out) = adenine(in). The catalysed reaction is cytosine(out) = cytosine(in). It catalyses the reaction xanthine(out) = xanthine(in). GSK4 (5-methyl-N-[2-(2-oxo-1-azepanyl)ethyl]-2-phenyl-1,3-oxazole-4-carbox-amide) disrupts the transport activity at 500 nM. Inhibited partially by 10 uM dipyridamole. Inhibited partially by N,N'-1,3-benzothiazole-2,6-diyldi(2-furamide), 2-bromo-N-(4-[1,3]oxazolo[4,5-b]pyridin-2-ylphenyl)benzamide, 4-methyl-7-[(3,4,5-trimethoxybenzyl)oxy]-2H-chromen-2-one, 2-(1-methyl-1H-indol-3-yl)-2-oxo-N-[4-(pyrrolidin-1-ylcarbonyl)phenyl]acet amide and 2-[2-(2-methylphenyl)vinyl]-4(3H)-quinazolinone. Functionally, sodium-independent nucleoside and nucleobase transporter with a broad substrate specificity. Plays a key role in the utilization of host purine sources by P.falciparum during intraerythrocytic development enabling parasite growth in the presence of physiological concentrations of adenosine, inosine, guanine, guanosine, xanthine and hypoxanthine. Essential for parasite transition from ring to trophozoite or from trophozoite to schizont stage but not for erythrocyte invasion by merozoites. This Plasmodium falciparum (isolate 3D7) protein is Nucleoside transporter 1.